The chain runs to 471 residues: Adenosylhomocysteinase (471 aa).

Substrate-binding residues include threonine 60, aspartate 135, and glutamate 196. 197-199 (TTT) is a binding site for NAD(+). Positions 226 and 230 each coordinate substrate. NAD(+) is bound by residues asparagine 231, 260–265 (GYGDVG), glutamate 283, asparagine 318, 339–341 (IGH), and asparagine 387.

This sequence belongs to the adenosylhomocysteinase family. It depends on NAD(+) as a cofactor.

It is found in the cytoplasm. It carries out the reaction S-adenosyl-L-homocysteine + H2O = L-homocysteine + adenosine. It participates in amino-acid biosynthesis; L-homocysteine biosynthesis; L-homocysteine from S-adenosyl-L-homocysteine: step 1/1. In terms of biological role, may play a key role in the regulation of the intracellular concentration of adenosylhomocysteine. The chain is Adenosylhomocysteinase from Chlorobaculum tepidum (strain ATCC 49652 / DSM 12025 / NBRC 103806 / TLS) (Chlorobium tepidum).